Consider the following 173-residue polypeptide: Soluble secreted antigen MPT53 (173 aa).

Residues 1–38 (MSLRLVSPIKAFADGIVAVAIAVVLMFGLANTPRAVAA) form the signal peptide. Cys73 and Cys76 form a disulfide bridge.

This sequence belongs to the thioredoxin family.

It is found in the secreted. Functionally, disulfide oxidoreductase that catalyzes the oxidation of reduced, unfolded secreted proteins to form disulfide bonds. Despite a weak homology to thioredoxin this cannot serve as a substrate for thioredoxin reductase. The polypeptide is Soluble secreted antigen MPT53 (mpt53) (Mycobacterium bovis (strain ATCC BAA-935 / AF2122/97)).